Here is a 103-residue protein sequence, read N- to C-terminus: Cell division protein FtsB (103 aa).

Topologically, residues 1 to 3 (MGK) are cytoplasmic. Residues 4–21 (LTLLLLAILVWLQYSLWF) form a helical membrane-spanning segment. Over 22–103 (GKNGIHDYTR…RAQSAGQNNR (82 aa)) the chain is Periplasmic. The stretch at 31 to 71 (RVNNDVAAQQATNAKLKARNDQLFAEIDDLNGGQEALEERA) forms a coiled coil.

The protein belongs to the FtsB family. Part of a complex composed of FtsB, FtsL and FtsQ.

The protein resides in the cell inner membrane. Essential cell division protein. May link together the upstream cell division proteins, which are predominantly cytoplasmic, with the downstream cell division proteins, which are predominantly periplasmic. This Escherichia coli O81 (strain ED1a) protein is Cell division protein FtsB.